Consider the following 1380-residue polypeptide: DNA-directed RNA polymerase subunit beta (1380 aa).

It belongs to the RNA polymerase beta chain family. As to quaternary structure, the RNAP catalytic core consists of 2 alpha, 1 beta, 1 beta' and 1 omega subunit. When a sigma factor is associated with the core the holoenzyme is formed, which can initiate transcription.

It catalyses the reaction RNA(n) + a ribonucleoside 5'-triphosphate = RNA(n+1) + diphosphate. In terms of biological role, DNA-dependent RNA polymerase catalyzes the transcription of DNA into RNA using the four ribonucleoside triphosphates as substrates. The chain is DNA-directed RNA polymerase subunit beta from Nitrobacter hamburgensis (strain DSM 10229 / NCIMB 13809 / X14).